The primary structure comprises 385 residues: tRNA N6-adenosine threonylcarbamoyltransferase (385 aa).

Positions 140, 144, and 161 each coordinate a divalent metal cation. Residues tyrosine 161–glycine 165, aspartate 193, glycine 208, glutamate 212, and asparagine 314 contribute to the substrate site. Aspartate 343 contributes to the a divalent metal cation binding site.

The protein belongs to the KAE1 / TsaD family. Component of the EKC/KEOPS complex composed of at least BUD32, CGI121, GON7, KAE1 and PCC1; the whole complex dimerizes. The cofactor is a divalent metal cation.

The protein resides in the cytoplasm. It is found in the nucleus. It carries out the reaction L-threonylcarbamoyladenylate + adenosine(37) in tRNA = N(6)-L-threonylcarbamoyladenosine(37) in tRNA + AMP + H(+). Its function is as follows. Component of the EKC/KEOPS complex that is required for the formation of a threonylcarbamoyl group on adenosine at position 37 (t(6)A37) in tRNAs that read codons beginning with adenine. The complex is probably involved in the transfer of the threonylcarbamoyl moiety of threonylcarbamoyl-AMP (TC-AMP) to the N6 group of A37. KAE1 likely plays a direct catalytic role in this reaction, but requires other protein(s) of the complex to fulfill this activity. The EKC/KEOPS complex also promotes both telomere uncapping and telomere elongation. The complex is required for efficient recruitment of transcriptional coactivators. This is tRNA N6-adenosine threonylcarbamoyltransferase from Eremothecium gossypii (strain ATCC 10895 / CBS 109.51 / FGSC 9923 / NRRL Y-1056) (Yeast).